Reading from the N-terminus, the 112-residue chain is Large ribosomal subunit protein uL22 (112 aa).

It belongs to the universal ribosomal protein uL22 family. Part of the 50S ribosomal subunit.

Functionally, this protein binds specifically to 23S rRNA; its binding is stimulated by other ribosomal proteins, e.g. L4, L17, and L20. It is important during the early stages of 50S assembly. It makes multiple contacts with different domains of the 23S rRNA in the assembled 50S subunit and ribosome. In terms of biological role, the globular domain of the protein is located near the polypeptide exit tunnel on the outside of the subunit, while an extended beta-hairpin is found that lines the wall of the exit tunnel in the center of the 70S ribosome. This Anaplasma marginale (strain Florida) protein is Large ribosomal subunit protein uL22.